We begin with the raw amino-acid sequence, 267 residues long: Palmitoyltransferase ZDHHC12 (267 aa).

Residues 1–9 (MALWPPLNS) lie on the Cytoplasmic side of the membrane. A helical membrane pass occupies residues 10-30 (GMLVRTGHTVLTWGITLVLFL). The Lumenal portion of the chain corresponds to 31–43 (HDTELRQWEEQGE). The chain crosses the membrane as a helical span at residues 44-64 (LLLPLTFLLLVLSSLLLYLAV). The Cytoplasmic portion of the chain corresponds to 65 to 140 (SLMDPGYVTT…ENCVGERNHP (76 aa)). The region spanning 97 to 147 (RRCRHCLVLQPLRARHCRDCRRCVRRYDHHCPWMENCVGERNHPLFVAYLA) is the DHHC domain. C127 serves as the catalytic S-palmitoyl cysteine intermediate. The helical transmembrane segment at 141–161 (LFVAYLALQLVVLLWGLCLAW) threads the bilayer. Topologically, residues 162 to 178 (SGLQFFQPWGLWLRSTG) are lumenal. Residues 179–199 (LLFTTFLLLSFFALVVALLLA) traverse the membrane as a helical segment. Over 200–267 (SHLYLVARNT…EEEEGSSQVV (68 aa)) the chain is Cytoplasmic.

The protein belongs to the DHHC palmitoyltransferase family.

The protein resides in the golgi apparatus membrane. It is found in the endoplasmic reticulum membrane. It catalyses the reaction L-cysteinyl-[protein] + hexadecanoyl-CoA = S-hexadecanoyl-L-cysteinyl-[protein] + CoA. Its function is as follows. Palmitoyltransferase that catalyzes the addition of palmitate onto various protein substrates. Has a palmitoyltransferase activity toward gephyrin/GPHN, regulating its clustering at synapses and its function in gamma-aminobutyric acid receptor clustering. Thereby, indirectly regulates GABAergic synaptic transmission. Negatively regulates NLRP3-driven inflammation. Catalyzes NLRP3 palmitoylation, leading to its degradation via the chaperone-mediated autophagy (CMA) process. The protein is Palmitoyltransferase ZDHHC12 of Mus musculus (Mouse).